The sequence spans 100 residues: Large ribosomal subunit protein eL21 (100 aa).

The interval 1–21 (MVKRTHGYRYKSRKLLRKKPR) is disordered.

This sequence belongs to the eukaryotic ribosomal protein eL21 family.

The protein is Large ribosomal subunit protein eL21 of Pyrobaculum islandicum (strain DSM 4184 / JCM 9189 / GEO3).